Reading from the N-terminus, the 93-residue chain is Class I hydrophobin SSP1 (93 aa).

Positions 1–26 (MKYITAISMLATAALTAATPLNGVEA) are cleaved as a signal peptide. Disulfide bonds link Cys39–Cys71, Cys47–Cys65, Cys48–Cys56, and Cys72–Cys89.

It belongs to the fungal hydrophobin family. In terms of assembly, self-assembles to form functional amyloid fibrils called rodlets. Self-assembly into fibrillar rodlets occurs spontaneously at hydrophobic:hydrophilic interfaces and the rodlets further associate laterally to form amphipathic monolayers.

It is found in the secreted. The protein localises to the cell wall. Its function is as follows. Aerial growth, conidiation, and dispersal of filamentous fungi in the environment rely upon a capability of their secreting small amphipathic proteins called hydrophobins (HPBs) with low sequence identity. Class I can self-assemble into an outermost layer of rodlet bundles on aerial cell surfaces, conferring cellular hydrophobicity that supports fungal growth, development and dispersal; whereas Class II form highly ordered films at water-air interfaces through intermolecular interactions but contribute nothing to the rodlet structure. SSP1 is a class I hydrophobin that acts as an effector in the ericoid mycorrhizal interaction with Vaccinium myrtillus. May enhance attachment of the fungus to the root surface and protect the fungal hypha from plant defense compounds. The polypeptide is Class I hydrophobin SSP1 (Oidiodendron maius (strain Zn)).